Consider the following 317-residue polypeptide: Ribonuclease Z (317 aa).

The Zn(2+) site is built by histidine 61, histidine 63, aspartate 65, histidine 66, histidine 139, aspartate 210, and histidine 268. The active-site Proton acceptor is aspartate 65.

Belongs to the RNase Z family. Homodimer. Requires Zn(2+) as cofactor.

It catalyses the reaction Endonucleolytic cleavage of RNA, removing extra 3' nucleotides from tRNA precursor, generating 3' termini of tRNAs. A 3'-hydroxy group is left at the tRNA terminus and a 5'-phosphoryl group is left at the trailer molecule.. Its activity is regulated as follows. Inhibited by high salt concentrations. Its function is as follows. Zinc phosphodiesterase, which displays some tRNA 3'-processing endonuclease activity. Probably involved in tRNA maturation, by removing a 3'-trailer from precursor tRNA. Can also catalyze the 5' end cleavage of the 5S rRNA. This chain is Ribonuclease Z, found in Haloferax volcanii (strain ATCC 29605 / DSM 3757 / JCM 8879 / NBRC 14742 / NCIMB 2012 / VKM B-1768 / DS2) (Halobacterium volcanii).